The following is a 357-amino-acid chain: tRNA N6-adenosine threonylcarbamoyltransferase (357 aa).

Residues H116 and H120 each contribute to the Fe cation site. Substrate is bound by residues 139–143 (LVSGG), D172, G185, and N284. Residue D312 coordinates Fe cation.

Belongs to the KAE1 / TsaD family. Fe(2+) serves as cofactor.

It is found in the cytoplasm. The catalysed reaction is L-threonylcarbamoyladenylate + adenosine(37) in tRNA = N(6)-L-threonylcarbamoyladenosine(37) in tRNA + AMP + H(+). Required for the formation of a threonylcarbamoyl group on adenosine at position 37 (t(6)A37) in tRNAs that read codons beginning with adenine. Is involved in the transfer of the threonylcarbamoyl moiety of threonylcarbamoyl-AMP (TC-AMP) to the N6 group of A37, together with TsaE and TsaB. TsaD likely plays a direct catalytic role in this reaction. The sequence is that of tRNA N6-adenosine threonylcarbamoyltransferase from Synechococcus sp. (strain CC9902).